The chain runs to 326 residues: Putative ribose-phosphate pyrophosphokinase 2 (326 aa).

Residues 43–45 and 102–103 contribute to the ATP site; these read DGE and RQ. His-136 serves as a coordination point for Mg(2+). Residues Asp-226 and 230–234 contribute to the D-ribose 5-phosphate site; that span reads NTGKT.

This sequence belongs to the ribose-phosphate pyrophosphokinase family. Class I subfamily. Homohexamer. The cofactor is Mg(2+).

The protein localises to the cytoplasm. The catalysed reaction is D-ribose 5-phosphate + ATP = 5-phospho-alpha-D-ribose 1-diphosphate + AMP + H(+). The protein operates within metabolic intermediate biosynthesis; 5-phospho-alpha-D-ribose 1-diphosphate biosynthesis; 5-phospho-alpha-D-ribose 1-diphosphate from D-ribose 5-phosphate (route I): step 1/1. Its function is as follows. Involved in the biosynthesis of the central metabolite phospho-alpha-D-ribosyl-1-pyrophosphate (PRPP) via the transfer of pyrophosphoryl group from ATP to 1-hydroxyl of ribose-5-phosphate (Rib-5-P). This is Putative ribose-phosphate pyrophosphokinase 2 from Streptococcus mutans serotype c (strain ATCC 700610 / UA159).